The sequence spans 123 residues: Ribosome-binding factor A (123 aa).

The protein belongs to the RbfA family. Monomer. Binds 30S ribosomal subunits, but not 50S ribosomal subunits or 70S ribosomes.

The protein localises to the cytoplasm. Its function is as follows. One of several proteins that assist in the late maturation steps of the functional core of the 30S ribosomal subunit. Associates with free 30S ribosomal subunits (but not with 30S subunits that are part of 70S ribosomes or polysomes). Required for efficient processing of 16S rRNA. May interact with the 5'-terminal helix region of 16S rRNA. In Neisseria meningitidis serogroup B (strain ATCC BAA-335 / MC58), this protein is Ribosome-binding factor A.